The primary structure comprises 1458 residues: DNA polymerase alpha catalytic subunit (1458 aa).

Disordered regions lie at residues 1–25 and 89–119; these read MSDSGSFAASRSRREKTEKSGRKEA and DLEDNALADSGKGAKGAPKDKTNVKKSSVSK. Basic and acidic residues predominate over residues 15–25; the sequence is EKTEKSGRKEA. DNA-binding stretches follow at residues 650–715 and 1241–1373; these read RINS…VHQI and QFRA…ACSK. Zn(2+) contacts are provided by Cys-1280, Cys-1283, Cys-1307, Cys-1312, Cys-1345, Cys-1350, Cys-1368, and Cys-1371. Residues 1280–1310 form a CysA-type zinc finger; sequence CPKCGTENIYDNVFDGSGLQIEPGLKRCSKP. The CysB motif signature appears at 1345-1371; sequence CEEKTCQNRTRRLPLSFSRNGPICQAC.

This sequence belongs to the DNA polymerase type-B family. As to quaternary structure, the DNA polymerase alpha complex is composed of four subunits: the catalytic subunit POLA1, the regulatory subunit POLA2, and the small and the large primase subunits PRIM1 and PRIM2 respectively. Interacts with PARP1; this interaction functions as part of the control of replication fork progression. Interacts with MCM10 and WDHD1; these interactions recruit the polymerase alpha complex to the pre-replicative complex bound to DNA. Interacts with RPA1; this interaction stabilizes the replicative complex and reduces the misincorporation rate of DNA polymerase alpha by acting as a fidelity clamp.

The protein resides in the nucleus. The catalysed reaction is DNA(n) + a 2'-deoxyribonucleoside 5'-triphosphate = DNA(n+1) + diphosphate. In terms of biological role, plays an essential role in the initiation of DNA replication. During the S phase of the cell cycle, the DNA polymerase alpha complex (composed of a catalytic subunit POLA1/p180, a regulatory subunit POLA2/p70 and two primase subunits PRIM1/p49 and PRIM2/p58) is recruited to DNA at the replicative forks via direct interactions with MCM10 and WDHD1. The primase subunit of the polymerase alpha complex initiates DNA synthesis by oligomerising short RNA primers on both leading and lagging strands. These primers are initially extended by the polymerase alpha catalytic subunit and subsequently transferred to polymerase delta and polymerase epsilon for processive synthesis on the lagging and leading strand, respectively. The reason this transfer occurs is because the polymerase alpha has limited processivity and lacks intrinsic 3' exonuclease activity for proofreading error, and therefore is not well suited for replicating long complexes. This Xenopus laevis (African clawed frog) protein is DNA polymerase alpha catalytic subunit (pola1).